Reading from the N-terminus, the 472-residue chain is UDP-N-acetylmuramate--L-alanine ligase (472 aa).

Residue 118–124 (GTHGKTT) participates in ATP binding.

It belongs to the MurCDEF family.

It is found in the cytoplasm. It carries out the reaction UDP-N-acetyl-alpha-D-muramate + L-alanine + ATP = UDP-N-acetyl-alpha-D-muramoyl-L-alanine + ADP + phosphate + H(+). It functions in the pathway cell wall biogenesis; peptidoglycan biosynthesis. Functionally, cell wall formation. This Methylococcus capsulatus (strain ATCC 33009 / NCIMB 11132 / Bath) protein is UDP-N-acetylmuramate--L-alanine ligase.